The primary structure comprises 321 residues: MGEPQGSMRILVTGGSGLVGKAIQKVVADGAGLPGEDWVFVSSKDADLTDTAQTRALFEKVQPTHVIHLAAMVGGLFRNIKYNLDFWRKNVHMNDNVLHSAFEVGARKVVSCLSTCIFPDKTTYPIDETMIHNGPPHNSNFGYSYAKRMIDVQNRAYFQQYGCTFTAVIPTNVFGPHDNFNIEDGHVLPGLIHKVHLAKSSGSALTVWGTGNPRRQFIYSLDLAQLFIWVLREYNEVEPIILSVGEEDEVSIKEAAEAVVEAMDFHGEVTFDTTKSDGQFKKTASNSKLRTYLPDFRFTPFKQAVKETCAWFTDNYEQARK.

14-20 provides a ligand contact to NADP(+); that stretch reads GGSGLVG. The active-site Proton donor/acceptor is the Tyr143. NADP(+)-binding positions include Lys147, 170-173, and His186; that span reads PTNV. Residues Lys194, Trp208, Arg215, and Asp277 each coordinate substrate.

Belongs to the NAD(P)-dependent epimerase/dehydratase family. Fucose synthase subfamily. In terms of assembly, homodimer.

The catalysed reaction is GDP-beta-L-fucose + NADP(+) = GDP-4-dehydro-alpha-D-rhamnose + NADPH + H(+). It functions in the pathway nucleotide-sugar biosynthesis; GDP-L-fucose biosynthesis via de novo pathway; GDP-L-fucose from GDP-alpha-D-mannose: step 2/2. Functionally, catalyzes the two-step NADP-dependent conversion of GDP-4-dehydro-6-deoxy-D-mannose to GDP-fucose, involving an epimerase and a reductase reaction. The polypeptide is GDP-L-fucose synthase (Homo sapiens (Human)).